We begin with the raw amino-acid sequence, 796 residues long: Endonuclease MutS2 (796 aa).

An ATP-binding site is contributed by Gly-339–Thr-346. The segment at Glu-620 to Asp-644 is disordered. The Smr domain maps to Leu-721 to Lys-796.

Belongs to the DNA mismatch repair MutS family. MutS2 subfamily. As to quaternary structure, homodimer. Binds to stalled ribosomes, contacting rRNA.

In terms of biological role, endonuclease that is involved in the suppression of homologous recombination and thus may have a key role in the control of bacterial genetic diversity. Functionally, acts as a ribosome collision sensor, splitting the ribosome into its 2 subunits. Detects stalled/collided 70S ribosomes which it binds and splits by an ATP-hydrolysis driven conformational change. Acts upstream of the ribosome quality control system (RQC), a ribosome-associated complex that mediates the extraction of incompletely synthesized nascent chains from stalled ribosomes and their subsequent degradation. Probably generates substrates for RQC. This is Endonuclease MutS2 from Lachnoclostridium phytofermentans (strain ATCC 700394 / DSM 18823 / ISDg) (Clostridium phytofermentans).